The following is a 372-amino-acid chain: Cytochrome b (372 aa).

Helical transmembrane passes span Phe25 to Ile45, Trp69 to Ile90, Trp105 to Leu125, and Phe170 to Met190. 2 residues coordinate heme b: His75 and His89. 2 residues coordinate heme b: His174 and His188. His193 is an a ubiquinone binding site. The next 4 helical transmembrane spans lie at His218–Thr238, Leu280–His300, Leu312–Thr332, and Phe339–Pro358.

It belongs to the cytochrome b family. As to quaternary structure, the cytochrome bc1 complex contains 3 respiratory subunits (MT-CYB, CYC1 and UQCRFS1), 2 core proteins (UQCRC1 and UQCRC2) and probably 6 low-molecular weight proteins. Heme b serves as cofactor.

It localises to the mitochondrion inner membrane. Functionally, component of the ubiquinol-cytochrome c reductase complex (complex III or cytochrome b-c1 complex) that is part of the mitochondrial respiratory chain. The b-c1 complex mediates electron transfer from ubiquinol to cytochrome c. Contributes to the generation of a proton gradient across the mitochondrial membrane that is then used for ATP synthesis. This chain is Cytochrome b (MT-CYB), found in Lycodon semicarinatus (Ryukyu odd-tooth snake).